The primary structure comprises 1368 residues: DNA-directed RNA polymerase subunit beta (1368 aa).

The protein belongs to the RNA polymerase beta chain family. The RNAP catalytic core consists of 2 alpha, 1 beta, 1 beta' and 1 omega subunit. When a sigma factor is associated with the core the holoenzyme is formed, which can initiate transcription.

It carries out the reaction RNA(n) + a ribonucleoside 5'-triphosphate = RNA(n+1) + diphosphate. In terms of biological role, DNA-dependent RNA polymerase catalyzes the transcription of DNA into RNA using the four ribonucleoside triphosphates as substrates. The polypeptide is DNA-directed RNA polymerase subunit beta (Paraburkholderia phytofirmans (strain DSM 17436 / LMG 22146 / PsJN) (Burkholderia phytofirmans)).